We begin with the raw amino-acid sequence, 440 residues long: Proline--tRNA ligase (440 aa).

The protein belongs to the class-II aminoacyl-tRNA synthetase family. ProS type 2 subfamily. Homodimer.

It is found in the cytoplasm. The enzyme catalyses tRNA(Pro) + L-proline + ATP = L-prolyl-tRNA(Pro) + AMP + diphosphate. Its function is as follows. Catalyzes the attachment of proline to tRNA(Pro) in a two-step reaction: proline is first activated by ATP to form Pro-AMP and then transferred to the acceptor end of tRNA(Pro). The protein is Proline--tRNA ligase of Methylocella silvestris (strain DSM 15510 / CIP 108128 / LMG 27833 / NCIMB 13906 / BL2).